A 2472-amino-acid polypeptide reads, in one-letter code: Spectrin alpha chain, non-erythrocytic 1 (2472 aa).

An N-acetylmethionine modification is found at methionine 1. 9 Spectrin repeats span residues 45–146 (RFQF…IKLL), 150–251 (KLVQ…QGKL), 256–358 (EVQR…ARLD), 361–465 (YRLQ…QYEQ), 468–570 (DLQL…AQLA), 574–676 (HLQQ…KLRE), 679–781 (QQQQ…QKLA), 785–888 (RLQQ…DLED), and 891–961 (QAQQ…QQVA). Serine 587 is modified (phosphoserine). Lysine 637 carries the post-translational modification N6-acetyllysine. Lysine 803 carries the N6-acetyllysine modification. Phosphoserine is present on residues serine 924, serine 982, serine 999, serine 1029, serine 1031, and serine 1041. An SH3 domain is found at 967-1026 (TGKELVLALYDYQEKSPREVTMKKGDILTLLNSTNKDWWKVEVNDRQGFVPAAYVKKLDP). One copy of the Spectrin 10 repeat lies at 1096 to 1166 (LFREANELQQ…LESEGLMAEE (71 aa)). Phosphotyrosine is present on tyrosine 1176. Phosphoserine is present on residues serine 1190, serine 1207, serine 1217, serine 1291, serine 1306, serine 1323, and serine 1338. A Spectrin 11 repeat occupies 1233 to 1336 (HEVQRFHRDA…RADQRKAKLG (104 aa)). Spectrin repeat units follow at residues 1339-1441 (HDLQ…RMML) and 1446-1549 (ELQL…KLGE). Lysine 1519 is subject to N6-acetyllysine. Phosphoserine is present on residues serine 1550, serine 1557, serine 1578, serine 1615, and serine 1647. Spectrin repeat units follow at residues 1552–1656 (TLQQ…KLKE), 1659–1762 (KQQN…KLSE), 1764–1868 (HRLH…RLEE), 1871–1974 (EYQQ…KLDE), 1978–2081 (FLQF…KLLE), 2092–2194 (LFLT…LELQ), and 2206–2310 (LRQE…NLEQ). Threonine 2020 is modified (phosphothreonine). At lysine 2052 the chain carries N6-acetyllysine. Residue threonine 2066 is modified to Phosphothreonine. 3 consecutive EF-hand domains span residues 2323–2358 (EALK…LGYD), 2366–2401 (EPDP…RETE), and 2404–2439 (KSSE…EQAD). Residues aspartate 2336, aspartate 2338, serine 2340, arginine 2342, glutamate 2347, aspartate 2379, asparagine 2381, aspartate 2383, histidine 2385, and glutamate 2390 each coordinate Ca(2+). Lysine 2421 carries the post-translational modification N6-acetyllysine.

The protein belongs to the spectrin family. As to quaternary structure, like erythrocyte spectrin, the spectrin-like proteins are capable of forming dimers which can further associate to tetramers. Interacts (via C-terminal spectrin repeats) with TRPC4. Interacts with CALM and EMD. Interacts with isoform 1 of ACP1. Identified in a complex with ACTN4, CASK, IQGAP1, MAGI2, NPHS1 and SPTBN1. Interacts with SHANK3 (via ANK repeats). Interacts with CLN3; this interaction regulates the fodrin localization at the plasma membrane. Post-translationally, phosphorylation of Tyr-1176 decreases sensitivity to cleavage by calpain in vitro.

Its subcellular location is the cytoplasm. It localises to the cytoskeleton. It is found in the cell cortex. Functionally, fodrin, which seems to be involved in secretion, interacts with calmodulin in a calcium-dependent manner and is thus candidate for the calcium-dependent movement of the cytoskeleton at the membrane. This Mus musculus (Mouse) protein is Spectrin alpha chain, non-erythrocytic 1 (Sptan1).